Consider the following 310-residue polypeptide: Proline iminopeptidase (310 aa).

The AB hydrolase-1 domain maps to 33–290 (PVIFLHGGPG…RVVQAGHRAF (258 aa)). Ser-107 (nucleophile) is an active-site residue. Asp-260 is an active-site residue. His-287 serves as the catalytic Proton donor.

It belongs to the peptidase S33 family.

It is found in the cytoplasm. It carries out the reaction Release of N-terminal proline from a peptide.. Specifically catalyzes the removal of N-terminal proline residues from peptides. The polypeptide is Proline iminopeptidase (pip) (Neisseria meningitidis serogroup A / serotype 4A (strain DSM 15465 / Z2491)).